The primary structure comprises 629 residues: Dapper homolog 3 (629 aa).

Phosphoserine is present on S6. 2 disordered regions span residues 50 to 76 (PGMGGAEAEDEEDADEDEDAAAARRAA) and 105 to 574 (GGLE…GGLV). Over residues 56 to 69 (EAEDEEDADEDEDA) the composition is skewed to acidic residues. The stretch at 63-87 (ADEDEDAAAARRAAAALEEQLEALP) forms a coiled coil. Positions 105–150 (GGLEQESGRSSGFYEDPSSTGGPDSPPSTFCGDSGFSGSSSYGRLG) are enriched in low complexity. Phosphoserine occurs at positions 165 and 239. R258 bears the Omega-N-methylarginine mark. Basic and acidic residues predominate over residues 301 to 311 (PAREPSLERVG). Residues 316 to 335 (SPAALSRAWASSWESEAAPE) show a composition bias toward low complexity. Residues 336 to 348 (PAAPPAAPSPPDS) are compositionally biased toward pro residues. S426 and S478 each carry phosphoserine. The segment covering 525-535 (SAGRLGPLGRR) has biased composition (low complexity). Over residues 536-546 (GPAGGVGGGYG) the composition is skewed to gly residues. A compositionally biased stretch (low complexity) spans 547-568 (ESESSASEGESPAFSSASSDSD). The PDZ-binding motif lies at 626-629 (MTTV).

Belongs to the dapper family. In terms of assembly, can form homodimers and heterodimers with DACT1 or DACT3. Interacts with CSNK1D, PKA catalytic subunit, PKC-type kinase, DVL1, DVL3, VANGL1, VANGL2 and CTNND1. Interacts with DVL2.

Functionally, may be involved in regulation of intracellular signaling pathways during development. Specifically thought to play a role in canonical and/or non-canonical Wnt signaling pathways through interaction with DSH (Dishevelled) family proteins. This chain is Dapper homolog 3 (DACT3), found in Homo sapiens (Human).